Reading from the N-terminus, the 282-residue chain is Shikimate dehydrogenase (NADP(+)) (282 aa).

Shikimate-binding positions include 19 to 21 (SFS) and Thr-66. Lys-70 (proton acceptor) is an active-site residue. Residues Asn-91 and Asp-106 each contribute to the shikimate site. Residues 130 to 134 (GAGGA), 152 to 157 (NRTVEK), Thr-196, Met-200, and Leu-224 each bind NADP(+). Tyr-226 serves as a coordination point for shikimate. Gly-247 is a binding site for NADP(+).

The protein belongs to the shikimate dehydrogenase family. As to quaternary structure, homodimer.

It carries out the reaction shikimate + NADP(+) = 3-dehydroshikimate + NADPH + H(+). The protein operates within metabolic intermediate biosynthesis; chorismate biosynthesis; chorismate from D-erythrose 4-phosphate and phosphoenolpyruvate: step 4/7. In terms of biological role, involved in the biosynthesis of the chorismate, which leads to the biosynthesis of aromatic amino acids. Catalyzes the reversible NADPH linked reduction of 3-dehydroshikimate (DHSA) to yield shikimate (SA). This chain is Shikimate dehydrogenase (NADP(+)), found in Methanocaldococcus jannaschii (strain ATCC 43067 / DSM 2661 / JAL-1 / JCM 10045 / NBRC 100440) (Methanococcus jannaschii).